We begin with the raw amino-acid sequence, 194 residues long: Adenylate kinase (194 aa).

10–15 lines the ATP pocket; it reads GAGKGT. The segment at 30-59 is NMP; that stretch reads STGDMLRAAVAQQSEIGKRAKAVMDAGQLV. AMP contacts are provided by residues T31, R36, 57-59, 85-88, and Q92; these read QLV and GYPR. The tract at residues 126-142 is LID; that stretch reads SRVAETIAKGAQVRSDD. Position 127 (R127) interacts with ATP. The AMP site is built by R139 and R150. A178 contacts ATP.

The protein belongs to the adenylate kinase family. As to quaternary structure, monomer.

It localises to the cytoplasm. It carries out the reaction AMP + ATP = 2 ADP. Its pathway is purine metabolism; AMP biosynthesis via salvage pathway; AMP from ADP: step 1/1. Catalyzes the reversible transfer of the terminal phosphate group between ATP and AMP. Plays an important role in cellular energy homeostasis and in adenine nucleotide metabolism. This chain is Adenylate kinase, found in Brucella melitensis biotype 1 (strain ATCC 23456 / CCUG 17765 / NCTC 10094 / 16M).